We begin with the raw amino-acid sequence, 251 residues long: Aspartate/glutamate leucyltransferase (251 aa).

Belongs to the R-transferase family. Bpt subfamily.

It is found in the cytoplasm. The catalysed reaction is N-terminal L-glutamyl-[protein] + L-leucyl-tRNA(Leu) = N-terminal L-leucyl-L-glutamyl-[protein] + tRNA(Leu) + H(+). The enzyme catalyses N-terminal L-aspartyl-[protein] + L-leucyl-tRNA(Leu) = N-terminal L-leucyl-L-aspartyl-[protein] + tRNA(Leu) + H(+). In terms of biological role, functions in the N-end rule pathway of protein degradation where it conjugates Leu from its aminoacyl-tRNA to the N-termini of proteins containing an N-terminal aspartate or glutamate. This chain is Aspartate/glutamate leucyltransferase, found in Nitrosospira multiformis (strain ATCC 25196 / NCIMB 11849 / C 71).